Consider the following 440-residue polypeptide: Chromosomal replication initiator protein DnaA (440 aa).

The interval 1-93 (MNVQLNEIWN…QTPVKPVAQE (93 aa)) is domain I, interacts with DnaA modulators. The domain II stretch occupies residues 94-101 (YTEDSNMS). Residues 102–318 (FLNPKYTFDT…GALNRVIAYS (217 aa)) form a domain III, AAA+ region region. Residues glycine 146, glycine 148, lysine 149, and threonine 150 each contribute to the ATP site. The segment at 319 to 440 (TLTENIINVD…EEIKKNITGG (122 aa)) is domain IV, binds dsDNA.

It belongs to the DnaA family. Oligomerizes as a right-handed, spiral filament on DNA at oriC.

It is found in the cytoplasm. Functionally, plays an essential role in the initiation and regulation of chromosomal replication. ATP-DnaA binds to the origin of replication (oriC) to initiate formation of the DNA replication initiation complex once per cell cycle. Binds the DnaA box (a 9 base pair repeat at the origin) and separates the double-stranded (ds)DNA. Forms a right-handed helical filament on oriC DNA; dsDNA binds to the exterior of the filament while single-stranded (ss)DNA is stabiized in the filament's interior. The ATP-DnaA-oriC complex binds and stabilizes one strand of the AT-rich DNA unwinding element (DUE), permitting loading of DNA polymerase. After initiation quickly degrades to an ADP-DnaA complex that is not apt for DNA replication. Binds acidic phospholipids. The sequence is that of Chromosomal replication initiator protein DnaA from Ruminiclostridium cellulolyticum (strain ATCC 35319 / DSM 5812 / JCM 6584 / H10) (Clostridium cellulolyticum).